The following is a 348-amino-acid chain: Dihydroorotase (348 aa).

2 residues coordinate Zn(2+): His-17 and His-19. Residues 19 to 21 (HLR) and Asn-45 each bind substrate. Lys-103, His-140, and His-178 together coordinate Zn(2+). Lys-103 is subject to N6-carboxylysine. His-140 contributes to the substrate binding site. Residue Leu-223 coordinates substrate. Asp-251 is a binding site for Zn(2+). Asp-251 is a catalytic residue. His-255 and Ala-267 together coordinate substrate.

This sequence belongs to the metallo-dependent hydrolases superfamily. DHOase family. Class II DHOase subfamily. As to quaternary structure, homodimer. The cofactor is Zn(2+).

It catalyses the reaction (S)-dihydroorotate + H2O = N-carbamoyl-L-aspartate + H(+). The protein operates within pyrimidine metabolism; UMP biosynthesis via de novo pathway; (S)-dihydroorotate from bicarbonate: step 3/3. In terms of biological role, catalyzes the reversible cyclization of carbamoyl aspartate to dihydroorotate. This chain is Dihydroorotase, found in Salmonella agona (strain SL483).